A 521-amino-acid chain; its full sequence is Glutamate--cysteine ligase (521 aa).

Belongs to the glutamate--cysteine ligase type 1 family. Type 1 subfamily.

The enzyme catalyses L-cysteine + L-glutamate + ATP = gamma-L-glutamyl-L-cysteine + ADP + phosphate + H(+). It functions in the pathway sulfur metabolism; glutathione biosynthesis; glutathione from L-cysteine and L-glutamate: step 1/2. This Aliivibrio fischeri (strain MJ11) (Vibrio fischeri) protein is Glutamate--cysteine ligase.